We begin with the raw amino-acid sequence, 126 residues long: MIRTMLQGKLHRVKVTQADLHYEGSCAIDQDFLDAAGILENEAIDIWNVTNGKRFSTYAIAAERGSRIISVNGAAAHCAAVGDIVIIASFVTMSDEEARRWQPNVAYFEGDNEMKRTAKAIPVQVA.

S25 acts as the Schiff-base intermediate with substrate; via pyruvic acid in catalysis. Position 25 is a pyruvic acid (Ser) (S25). Position 57 (T57) interacts with substrate. Residue Y58 is the Proton donor of the active site. G73–A75 serves as a coordination point for substrate.

Belongs to the PanD family. In terms of assembly, heterooctamer of four alpha and four beta subunits. Requires pyruvate as cofactor. In terms of processing, is synthesized initially as an inactive proenzyme, which is activated by self-cleavage at a specific serine bond to produce a beta-subunit with a hydroxyl group at its C-terminus and an alpha-subunit with a pyruvoyl group at its N-terminus.

The protein resides in the cytoplasm. The catalysed reaction is L-aspartate + H(+) = beta-alanine + CO2. It functions in the pathway cofactor biosynthesis; (R)-pantothenate biosynthesis; beta-alanine from L-aspartate: step 1/1. Catalyzes the pyruvoyl-dependent decarboxylation of aspartate to produce beta-alanine. This chain is Aspartate 1-decarboxylase, found in Citrobacter koseri (strain ATCC BAA-895 / CDC 4225-83 / SGSC4696).